The primary structure comprises 285 residues: Undecaprenyl-diphosphatase (285 aa).

The next 7 helical transmembrane spans lie at 40–60 (DELL…LLYF), 92–112 (LCIL…ENFI), 122–142 (SVYA…WADA), 159–179 (FLIG…RSGI), 197–217 (FSML…LLGL), 233–253 (LIVA…LMAL), and 259–279 (FLPF…TSPI).

This sequence belongs to the UppP family.

The protein resides in the cell inner membrane. The catalysed reaction is di-trans,octa-cis-undecaprenyl diphosphate + H2O = di-trans,octa-cis-undecaprenyl phosphate + phosphate + H(+). Its function is as follows. Catalyzes the dephosphorylation of undecaprenyl diphosphate (UPP). Confers resistance to bacitracin. The sequence is that of Undecaprenyl-diphosphatase from Hyphomonas neptunium (strain ATCC 15444).